We begin with the raw amino-acid sequence, 427 residues long: Histidine--tRNA ligase (427 aa).

Belongs to the class-II aminoacyl-tRNA synthetase family. Homodimer.

It localises to the cytoplasm. The catalysed reaction is tRNA(His) + L-histidine + ATP = L-histidyl-tRNA(His) + AMP + diphosphate + H(+). The sequence is that of Histidine--tRNA ligase from Proteus mirabilis (strain HI4320).